The chain runs to 229 residues: Enolase-phosphatase E1 (229 aa).

The protein belongs to the HAD-like hydrolase superfamily. MasA/MtnC family. In terms of assembly, monomer. Requires Mg(2+) as cofactor.

It catalyses the reaction 5-methylsulfanyl-2,3-dioxopentyl phosphate + H2O = 1,2-dihydroxy-5-(methylsulfanyl)pent-1-en-3-one + phosphate. The protein operates within amino-acid biosynthesis; L-methionine biosynthesis via salvage pathway; L-methionine from S-methyl-5-thio-alpha-D-ribose 1-phosphate: step 3/6. Its pathway is amino-acid biosynthesis; L-methionine biosynthesis via salvage pathway; L-methionine from S-methyl-5-thio-alpha-D-ribose 1-phosphate: step 4/6. Bifunctional enzyme that catalyzes the enolization of 2,3-diketo-5-methylthiopentyl-1-phosphate (DK-MTP-1-P) into the intermediate 2-hydroxy-3-keto-5-methylthiopentenyl-1-phosphate (HK-MTPenyl-1-P), which is then dephosphorylated to form the acireductone 1,2-dihydroxy-3-keto-5-methylthiopentene (DHK-MTPene). In Citrobacter koseri (strain ATCC BAA-895 / CDC 4225-83 / SGSC4696), this protein is Enolase-phosphatase E1.